Consider the following 201-residue polypeptide: MESTVAHAFHRFALAILGLALPVALVAYGGNGDSRKAAPLAPKAAALGRSMPETPTGDVLTISSPAFADGAPIPEQYTCKGANIAPPLTWSAPFGGALVVDDPDAPREPYVHWIVIGIAPGAGSTADGETPGGGISLPNSSGQPAYTGPCPPAGTGTHHYRFTLYHLPAVPPLAGLAGTQAARVIAQAATMQARLIGTYEG.

Residues 125–146 (TADGETPGGGISLPNSSGQPAY) are disordered.

It belongs to the UPF0098 family.

This is UPF0098 protein MT1961 from Mycobacterium tuberculosis (strain CDC 1551 / Oshkosh).